A 201-amino-acid chain; its full sequence is MEKFTTLEGVAAPMRIINIDTDRIIPKQYLKTIKRTGLGQGLFSEMRYNDDGSENPDFVLNQPAYRNAKILVVGDNFGCGSSREHAPWALADFGIRCVISTSFADIFFNNCAKNGILAIVVPPEDLEKLFEDAERGANATLTIDLAAQTIKGPDGGTLHFDIDEGRKHNLLNGLDEIGLTLDQKAPAIEAYEAKLAQREWA.

This sequence belongs to the LeuD family. LeuD type 1 subfamily. In terms of assembly, heterodimer of LeuC and LeuD.

It catalyses the reaction (2R,3S)-3-isopropylmalate = (2S)-2-isopropylmalate. Its pathway is amino-acid biosynthesis; L-leucine biosynthesis; L-leucine from 3-methyl-2-oxobutanoate: step 2/4. Catalyzes the isomerization between 2-isopropylmalate and 3-isopropylmalate, via the formation of 2-isopropylmaleate. This chain is 3-isopropylmalate dehydratase small subunit, found in Methylorubrum populi (strain ATCC BAA-705 / NCIMB 13946 / BJ001) (Methylobacterium populi).